We begin with the raw amino-acid sequence, 389 residues long: 8-amino-7-oxononanoate synthase (389 aa).

Arginine 23 provides a ligand contact to substrate. Residue 114–115 coordinates pyridoxal 5'-phosphate; the sequence is GY. Histidine 139 contacts substrate. Residues serine 185, histidine 213, and threonine 242 each contribute to the pyridoxal 5'-phosphate site. Lysine 245 bears the N6-(pyridoxal phosphate)lysine mark. Threonine 357 serves as a coordination point for substrate.

Belongs to the class-II pyridoxal-phosphate-dependent aminotransferase family. BioF subfamily. In terms of assembly, homodimer. It depends on pyridoxal 5'-phosphate as a cofactor.

It carries out the reaction 6-carboxyhexanoyl-[ACP] + L-alanine + H(+) = (8S)-8-amino-7-oxononanoate + holo-[ACP] + CO2. It participates in cofactor biosynthesis; biotin biosynthesis. Functionally, catalyzes the decarboxylative condensation of pimeloyl-[acyl-carrier protein] and L-alanine to produce 8-amino-7-oxononanoate (AON), [acyl-carrier protein], and carbon dioxide. This chain is 8-amino-7-oxononanoate synthase, found in Acidithiobacillus ferrooxidans (strain ATCC 23270 / DSM 14882 / CIP 104768 / NCIMB 8455) (Ferrobacillus ferrooxidans (strain ATCC 23270)).